We begin with the raw amino-acid sequence, 435 residues long: Cell adhesion molecule 2 (435 aa).

The first 24 residues, 1-24, serve as a signal peptide directing secretion; sequence MIWKRSAVLRFYSVCGLLLQGSQG. Residues 25-367 lie on the Extracellular side of the membrane; it reads QFPLTQNVTV…ALAGQNGPDH (343 aa). An Ig-like V-type domain is found at 27-119; the sequence is PLTQNVTVVE…PVKTSKAYLT (93 aa). 2 N-linked (GlcNAc...) asparagine glycosylation sites follow: Asn-31 and Asn-51. 3 cysteine pairs are disulfide-bonded: Cys-44/Cys-104, Cys-146/Cys-203, and Cys-248/Cys-296. 2 consecutive Ig-like C2-type domains span residues 127-219 and 227-312; these read PQIS…VAMQ and PSVK…YVLI. N-linked (GlcNAc...) asparagine glycosylation occurs at Asn-291. The helical transmembrane segment at 368-388 threads the bilayer; sequence ALIGGIVAVVVFVTLCSIFLL. Residues 389–435 are Cytoplasmic-facing; the sequence is GRYLARHKGTYLTNEAKGAEDAPDADTAIINAEGSQVNAEEKKEYFI. Ser-423 bears the Phosphoserine mark.

This sequence belongs to the nectin family.

It localises to the cell membrane. The protein resides in the synapse. Its subcellular location is the cell projection. It is found in the axon. In terms of biological role, adhesion molecule that engages in homo- and heterophilic interactions with the other nectin-like family members, leading to cell aggregation. Important for synapse organization, providing regulated trans-synaptic adhesion. Preferentially binds to oligodendrocytes. Its function is as follows. (Microbial infection) Induces cell fusion in neuron infected by a neuropathogenic strain of measles. Interacts with measles hemagglutinin to trigger hyperfusogenic F-mediated membrane fusion and presumably transsynaptic cell-to-cell transmission of the virus. In Homo sapiens (Human), this protein is Cell adhesion molecule 2 (CADM2).